Consider the following 261-residue polypeptide: MRIALGIEYDGSKFYGWQRQAEVNSVQAELERALSIVANEPIEVQCAGRTDAGVHATGQVVHFDTNAVRKEGAWTLGVNVHLPDDIAVRWAMPVNDDFHARFSATARRYRYVIFNHNFRPGILRKGVSHYHGDIDVERMHDAAQALIGERDFTSFRAIGCQSNTPFRNVHKVSVSRHGMYIVVDIQANAFLHHMVRNIVGSLLEIGLGNQPLDWMATLLEAKDRSQAAATAKPHGLYLVDVTYPESFGLPKLSLGPLFMPD.

Residue Asp51 is the Nucleophile of the active site. Position 109 (Tyr109) interacts with substrate.

The protein belongs to the tRNA pseudouridine synthase TruA family. As to quaternary structure, homodimer.

It carries out the reaction uridine(38/39/40) in tRNA = pseudouridine(38/39/40) in tRNA. Functionally, formation of pseudouridine at positions 38, 39 and 40 in the anticodon stem and loop of transfer RNAs. This chain is tRNA pseudouridine synthase A, found in Shewanella amazonensis (strain ATCC BAA-1098 / SB2B).